Here is a 43-residue protein sequence, read N- to C-terminus: Protein PsbN (43 aa).

Residues 5-27 (TLVTISISCLLVSFTGYALYTAF) form a helical membrane-spanning segment.

Belongs to the PsbN family.

It localises to the plastid. The protein localises to the chloroplast thylakoid membrane. In terms of biological role, may play a role in photosystem I and II biogenesis. The chain is Protein PsbN from Pinus koraiensis (Korean pine).